The following is a 495-amino-acid chain: UDP-N-acetylmuramoyl-L-alanyl-D-glutamate--2,6-diaminopimelate ligase (495 aa).

UDP-N-acetyl-alpha-D-muramoyl-L-alanyl-D-glutamate contacts are provided by residues Leu27, Ser29, and 44–46; that span reads HQA. 116-122 is a binding site for ATP; sequence GTNGKTT. Residues Asn157, 158–159, Ser185, Gln191, and Arg193 contribute to the UDP-N-acetyl-alpha-D-muramoyl-L-alanyl-D-glutamate site; that span reads TT. Lys225 bears the N6-carboxylysine mark. Residues Arg390, 414–417, Gly465, and Glu469 contribute to the meso-2,6-diaminopimelate site; that span reads DNPR. The Meso-diaminopimelate recognition motif signature appears at 414–417; the sequence is DNPR.

This sequence belongs to the MurCDEF family. MurE subfamily. Mg(2+) is required as a cofactor. In terms of processing, carboxylation is probably crucial for Mg(2+) binding and, consequently, for the gamma-phosphate positioning of ATP.

Its subcellular location is the cytoplasm. The catalysed reaction is UDP-N-acetyl-alpha-D-muramoyl-L-alanyl-D-glutamate + meso-2,6-diaminopimelate + ATP = UDP-N-acetyl-alpha-D-muramoyl-L-alanyl-gamma-D-glutamyl-meso-2,6-diaminopimelate + ADP + phosphate + H(+). The protein operates within cell wall biogenesis; peptidoglycan biosynthesis. Catalyzes the addition of meso-diaminopimelic acid to the nucleotide precursor UDP-N-acetylmuramoyl-L-alanyl-D-glutamate (UMAG) in the biosynthesis of bacterial cell-wall peptidoglycan. In Enterobacter sp. (strain 638), this protein is UDP-N-acetylmuramoyl-L-alanyl-D-glutamate--2,6-diaminopimelate ligase.